We begin with the raw amino-acid sequence, 146 residues long: Sordarin/hypoxysordarin biosynthesis cluster protein G (146 aa).

It functions in the pathway antibiotic biosynthesis. Its function is as follows. Part of the gene cluster that mediates the biosynthesis of sordarin and hypoxysordarin, glycoside antibiotics with a unique tetracyclic diterpene aglycone structure. First, the geranylgeranyl diphosphate synthase sdnC constructs GGDP from farnesyl diphosphate and isopentenyl diphosphate. The diterpene cyclase sdnA then catalyzes the cyclization of GGDP to afford cycloaraneosene. Cycloaraneosene is then hydroxylated four times by the putative cytochrome P450 monooxygenases sdnB, sdnE, sdnF and sdnH to give a hydroxylated cycloaraneosene derivative such as cycloaraneosene-8,9,13,19-tetraol. Although the order of the hydroxylations is unclear, at least C8, C9 and C13 of the cycloaraneosene skeleton are hydroxylated before the sordaricin formation. Dehydration of the 13-hydroxy group of the hydroxylated cycloaraneosene derivative might be catalyzed by an unassigned hypothetical protein such as sdnG and sdnP to construct the cyclopentadiene moiety. The FAD-dependent oxidoreductase sdnN is proposed to catalyze the oxidation at C9 of the hydroxylated cycloaraneosene derivative and also catalyze the Baeyer-Villiger oxidation to give the lactone intermediate. The presumed lactone intermediate would be hydrolyzed to give an acrolein moiety and a carboxylate moiety. Then, [4+2]cycloaddition would occur between the acrolein moiety and the cyclopentadiene moiety to give sordaricin. SdnN might also be involved in the [4+2]cycloaddition after the hypothesized oxidation to accommodate the oxidized product and prompt the [4+2]cycloaddition. GDP-6-deoxy-D-altrose may be biosynthesized from GDP-D-mannose by the putative GDP-mannose-4,6-dehydratase sdnI and the short-chain dehydrogenase sdnK. The glycosyltransferase sdnJ catalyzes the attachment of 6-deoxy-D-altrose onto the 19-hydroxy group of sordaricin to give 4'-O-demethylsordarin. The methyltransferase sdnD would complete the biosynthesis of sordarin. Sordarin can be further modified into hypoxysordarin. The unique acyl chain at the 3'-hydroxy group of hypoxysordarin would be constructed by an iterative type I PKS sdnO and the trans-acting polyketide methyltransferase sdnL. SdnL would be responsible for the introduction of an alpha-methyl group of the polyketide chain. Alternatively, the beta-lactamase-like protein sdnR might be responsible for the cleavage and transfer of the polyketide chain from the PKS sdnO to sordarin. Two putative cytochrome P450 monooxygenases, sdnQ and sdnT, might catalyze the epoxidations of the polyketide chain to complete the biosynthesis of hypoxysordarin. Transcriptional regulators sdnM and sdnS are presumably encoded for the transcriptional regulation of the expression of the sdn gene cluster. The protein is Sordarin/hypoxysordarin biosynthesis cluster protein G of Sordaria araneosa (Pleurage araneosa).